A 293-amino-acid chain; its full sequence is Small ribosomal subunit protein uS5 (293 aa).

The segment at 1-55 is disordered; the sequence is MADDAGAAGGPGGPGGPGLGGRGGFRGGFGSGLRGRGRGRGRGRGRGRGARGGKA. Alanine 2 is modified (N-acetylalanine). Gly residues predominate over residues 7 to 34; sequence AAGGPGGPGGPGLGGRGGFRGGFGSGLR. 14 repeat units span residues 9–11, 12–14, 15–17, 22–25, 26–29, 34–35, 36–37, 38–39, 40–41, 42–43, 44–45, 46–47, 48–49, and 51–52. The segment at 9-17 is 3 X 3 AA tandem repeats of G-G-P; the sequence is GGPGGPGGP. The 2 X 4 AA tandem repeats of R-G-G-F stretch occupies residues 22–29; the sequence is RGGFRGGF. The segment at 34–52 is 9 X 2 AA tandem repeats of R-G; it reads RGRGRGRGRGRGRGRGARG. Basic residues predominate over residues 35–51; the sequence is GRGRGRGRGRGRGRGAR. Glycyl lysine isopeptide (Lys-Gly) (interchain with G-Cter in ubiquitin) cross-links involve residues lysine 54 and lysine 58. The 64-residue stretch at 102–165 folds into the S5 DRBM domain; it reads LKDEVLKIMP…ILAKLSIVPV (64 aa). At threonine 252 the chain carries Phosphothreonine. An N6-acetyllysine modification is found at lysine 263. Serine 264 is subject to Phosphoserine. Phosphothreonine is present on threonine 270. Lysine 275 bears the N6-acetyllysine; alternate mark. A Glycyl lysine isopeptide (Lys-Gly) (interchain with G-Cter in SUMO1); alternate cross-link involves residue lysine 275. A Glycyl lysine isopeptide (Lys-Gly) (interchain with G-Cter in SUMO2); alternate cross-link involves residue lysine 275. Lysine 275 participates in a covalent cross-link: Glycyl lysine isopeptide (Lys-Gly) (interchain with G-Cter in ubiquitin); alternate. Serine 281 is subject to Phosphoserine.

It belongs to the universal ribosomal protein uS5 family. As to quaternary structure, component of the small ribosomal subunit. Interacts with zinc finger protein ZNF277 (via zinc-finger domains); the interaction is direct; the interaction is extra-ribosomal. Interaction with ZNF277 competes with the binding of RPS2 to protein arginine methyltransferase PRMT3. Citrullinated by PADI4 in the Arg/Gly-rich region. Post-translationally, asymmetric arginine dimethylation by PRMT3 occurs at multiple sites in the Arg/Gly-rich region. In terms of processing, monoubiquitinated at Lys-54 and Lys-58 by RNF10 when a ribosome has stalled during translation, leading to its degradation by the proteasome. Deubiquitinated at Lys-54 and Lys-58 by USP10, preventing degradation by the proteasome and promoting 40S ribosome subunit recycling following ribosome dissociation.

Its subcellular location is the cytoplasm. The protein localises to the nucleus. The protein resides in the nucleolus. In terms of biological role, component of the ribosome, a large ribonucleoprotein complex responsible for the synthesis of proteins in the cell. The small ribosomal subunit (SSU) binds messenger RNAs (mRNAs) and translates the encoded message by selecting cognate aminoacyl-transfer RNA (tRNA) molecules. The large subunit (LSU) contains the ribosomal catalytic site termed the peptidyl transferase center (PTC), which catalyzes the formation of peptide bonds, thereby polymerizing the amino acids delivered by tRNAs into a polypeptide chain. The nascent polypeptides leave the ribosome through a tunnel in the LSU and interact with protein factors that function in enzymatic processing, targeting, and the membrane insertion of nascent chains at the exit of the ribosomal tunnel. Plays a role in the assembly and function of the 40S ribosomal subunit. Mutations in this protein affects the control of translational fidelity. Involved in nucleolar processing of pre-18S ribosomal RNA and ribosome assembly. This chain is Small ribosomal subunit protein uS5 (Rps2), found in Rattus norvegicus (Rat).